The sequence spans 56 residues: Large ribosomal subunit protein eL37 (56 aa).

Zn(2+) contacts are provided by Cys19, Cys22, Cys34, and Cys37. A C4-type zinc finger spans residues 19–37 (CRRCGSVSLNIHTKQCTSC).

The protein belongs to the eukaryotic ribosomal protein eL37 family. Zn(2+) serves as cofactor.

In terms of biological role, binds to the 23S rRNA. This chain is Large ribosomal subunit protein eL37, found in Methanococcoides burtonii (strain DSM 6242 / NBRC 107633 / OCM 468 / ACE-M).